The chain runs to 169 residues: Glutathione peroxidase (169 aa).

The active site involves U43. A non-standard amino acid (selenocysteine) is located at residue U43.

This sequence belongs to the glutathione peroxidase family.

It catalyses the reaction 2 glutathione + H2O2 = glutathione disulfide + 2 H2O. This is Glutathione peroxidase (GPX1) from Schistosoma mansoni (Blood fluke).